Reading from the N-terminus, the 239-residue chain is Purine nucleoside phosphorylase DeoD-type (239 aa).

An a purine D-ribonucleoside-binding site is contributed by His-5. The phosphate site is built by Gly-21 and Arg-25. An N6-acetyllysine modification is found at Lys-27. Phosphate is bound by residues Arg-44 and 88 to 91 (RVGS). Residues 180 to 182 (EME) and 204 to 205 (SD) each bind a purine D-ribonucleoside. Asp-205 functions as the Proton donor in the catalytic mechanism.

The protein belongs to the PNP/UDP phosphorylase family. As to quaternary structure, homohexamer; trimer of homodimers.

It catalyses the reaction a purine D-ribonucleoside + phosphate = a purine nucleobase + alpha-D-ribose 1-phosphate. It carries out the reaction a purine 2'-deoxy-D-ribonucleoside + phosphate = a purine nucleobase + 2-deoxy-alpha-D-ribose 1-phosphate. Its function is as follows. Catalyzes the reversible phosphorolytic breakdown of the N-glycosidic bond in the beta-(deoxy)ribonucleoside molecules, with the formation of the corresponding free purine bases and pentose-1-phosphate. The chain is Purine nucleoside phosphorylase DeoD-type from Escherichia coli O8 (strain IAI1).